The sequence spans 224 residues: Flagellar L-ring protein (224 aa).

A signal peptide spans 1-15; it reads MRSLLFSLTALVLAG. Residue C16 is the site of N-palmitoyl cysteine attachment. C16 carries the S-diacylglycerol cysteine lipid modification.

It belongs to the FlgH family. The basal body constitutes a major portion of the flagellar organelle and consists of four rings (L,P,S, and M) mounted on a central rod.

It is found in the cell outer membrane. Its subcellular location is the bacterial flagellum basal body. Assembles around the rod to form the L-ring and probably protects the motor/basal body from shearing forces during rotation. This Idiomarina loihiensis (strain ATCC BAA-735 / DSM 15497 / L2-TR) protein is Flagellar L-ring protein.